A 259-amino-acid polypeptide reads, in one-letter code: MASSQRYFALLALFAVSLKFCYCQNETIDVAGSGTAGVTWYGEPFGAGSTGGACGYGSAVANPPLYAMVSAGGPSLFNNGKGCGTCYQVVCIGHPACSGSPITVTITDECPGGPCASEPVHIDLSGKAMGALAKPGQADQLRSAGVIRVNYKRAACLYRGTNIVFRMDAGANPYYISFVVEYENGDGDLSNVEIQPAGGSFISMQEMRSAVWKVNSGSALRGPFNIRLTSGESHKVIVAYNVIPANWKPDESYRSIVNF.

The signal sequence occupies residues 1–23; sequence MASSQRYFALLALFAVSLKFCYC. Asparagine 25 carries N-linked (GlcNAc...) asparagine glycosylation. The Expansin-like EG45 domain maps to 51-161; the sequence is GGACGYGSAV…KRAACLYRGT (111 aa). 3 disulfide bridges follow: cysteine 54/cysteine 83, cysteine 86/cysteine 156, and cysteine 91/cysteine 97. The Expansin-like CBD domain occupies 174 to 255; sequence YYISFVVEYE…NWKPDESYRS (82 aa).

Belongs to the expansin family. Expansin B subfamily.

It localises to the secreted. Its subcellular location is the cell wall. It is found in the membrane. Its function is as follows. May cause loosening and extension of plant cell walls by disrupting non-covalent bonding between cellulose microfibrils and matrix glucans. No enzymatic activity has been found. The chain is Expansin-B4 (EXPB4) from Arabidopsis thaliana (Mouse-ear cress).